We begin with the raw amino-acid sequence, 1028 residues long: Beta-galactosidase (1028 aa).

Positions 104 and 203 each coordinate substrate. Position 203 (aspartate 203) interacts with Na(+). Residues glutamate 418, histidine 420, and glutamate 463 each coordinate Mg(2+). Substrate contacts are provided by residues glutamate 463 and 539 to 542 (EYAH). Catalysis depends on glutamate 463, which acts as the Proton donor. Residue glutamate 539 is the Nucleophile of the active site. Asparagine 599 lines the Mg(2+) pocket. 2 residues coordinate Na(+): phenylalanine 603 and asparagine 606. Residues asparagine 606 and tryptophan 1004 each coordinate substrate.

Belongs to the glycosyl hydrolase 2 family. Homotetramer. It depends on Mg(2+) as a cofactor. Na(+) is required as a cofactor.

It catalyses the reaction Hydrolysis of terminal non-reducing beta-D-galactose residues in beta-D-galactosides.. The chain is Beta-galactosidase from Enterobacter sp. (strain 638).